The following is a 386-amino-acid chain: Ribonucleoside-diphosphate reductase subunit M2 (386 aa).

A compositionally biased stretch (polar residues) spans 1 to 24; it reads MSSTRSPLKTKNENTISTKMNNMS. The disordered stretch occupies residues 1–36; that stretch reads MSSTRSPLKTKNENTISTKMNNMSFVDKENTPPSLS. Position 6 is a phosphoserine (Ser6). At Thr31 the chain carries Phosphothreonine. Positions 135, 166, and 169 each coordinate Fe cation. Residue Tyr173 is part of the active site. The Fe cation site is built by Glu229, Glu263, and His266.

The protein belongs to the ribonucleoside diphosphate reductase small chain family. Heterodimer of a large and a small subunit. It depends on Fe cation as a cofactor.

It is found in the cytoplasm. The enzyme catalyses a 2'-deoxyribonucleoside 5'-diphosphate + [thioredoxin]-disulfide + H2O = a ribonucleoside 5'-diphosphate + [thioredoxin]-dithiol. Its function is as follows. Provides the precursors necessary for DNA synthesis. Catalyzes the biosynthesis of deoxyribonucleotides from the corresponding ribonucleotides. The sequence is that of Ribonucleoside-diphosphate reductase subunit M2 (rrm2) from Danio rerio (Zebrafish).